The following is a 208-amino-acid chain: Protein GrpE (208 aa).

Over residues 1 to 12 (MTNKDESVEKNT) the composition is skewed to basic and acidic residues. Positions 1-59 (MTNKDESVEKNTESTVEETNIKQNIDDSVEQAEESKGHLQDEAIEETSDENVIEEIDPK) are disordered. The segment covering 13–23 (ESTVEETNIKQ) has biased composition (polar residues). Over residues 42-55 (EAIEETSDENVIEE) the composition is skewed to acidic residues.

The protein belongs to the GrpE family. Homodimer.

Its subcellular location is the cytoplasm. Functionally, participates actively in the response to hyperosmotic and heat shock by preventing the aggregation of stress-denatured proteins, in association with DnaK and GrpE. It is the nucleotide exchange factor for DnaK and may function as a thermosensor. Unfolded proteins bind initially to DnaJ; upon interaction with the DnaJ-bound protein, DnaK hydrolyzes its bound ATP, resulting in the formation of a stable complex. GrpE releases ADP from DnaK; ATP binding to DnaK triggers the release of the substrate protein, thus completing the reaction cycle. Several rounds of ATP-dependent interactions between DnaJ, DnaK and GrpE are required for fully efficient folding. This is Protein GrpE from Staphylococcus aureus (strain Mu3 / ATCC 700698).